Consider the following 299-residue polypeptide: Bifunctional methyltransferase-like/endonuclease (299 aa).

A probable methylated-DNA--protein-cysteine methyltransferase-like region spans residues 1-80 (MLSSKLLDIN…NLIVSPMQKA (80 aa)). Residues 81-299 (LLEKEVKIIG…GRGDSNPGRD (219 aa)) form an endonuclease V region. Residues Asp135 and Asn197 each coordinate Mg(2+).

This sequence in the N-terminal section; belongs to the MGMT family. It in the C-terminal section; belongs to the endonuclease V family. The cofactor is Mg(2+).

It localises to the cytoplasm. It catalyses the reaction Endonucleolytic cleavage at apurinic or apyrimidinic sites to products with a 5'-phosphate.. DNA repair enzyme involved in the repair of deaminated bases. Selectively cleaves double-stranded DNA at the second phosphodiester bond 3' to a deoxyinosine leaving behind the intact lesion on the nicked DNA. The polypeptide is Bifunctional methyltransferase-like/endonuclease (Nanoarchaeum equitans (strain Kin4-M)).